The primary structure comprises 363 residues: Aminomethyltransferase (363 aa).

Belongs to the GcvT family. The glycine cleavage system is composed of four proteins: P, T, L and H.

The catalysed reaction is N(6)-[(R)-S(8)-aminomethyldihydrolipoyl]-L-lysyl-[protein] + (6S)-5,6,7,8-tetrahydrofolate = N(6)-[(R)-dihydrolipoyl]-L-lysyl-[protein] + (6R)-5,10-methylene-5,6,7,8-tetrahydrofolate + NH4(+). Its function is as follows. The glycine cleavage system catalyzes the degradation of glycine. This Teredinibacter turnerae (strain ATCC 39867 / T7901) protein is Aminomethyltransferase.